The sequence spans 264 residues: Thymidylate synthase (264 aa).

Position 21 (arginine 21) interacts with dUMP. Residue histidine 51 participates in (6R)-5,10-methylene-5,6,7,8-tetrahydrofolate binding. 126 to 127 (RR) is a dUMP binding site. Catalysis depends on cysteine 146, which acts as the Nucleophile. DUMP is bound by residues 166–169 (RSCD), asparagine 177, and 207–209 (HLY). (6R)-5,10-methylene-5,6,7,8-tetrahydrofolate is bound at residue aspartate 169. Residue alanine 263 participates in (6R)-5,10-methylene-5,6,7,8-tetrahydrofolate binding.

It belongs to the thymidylate synthase family. Bacterial-type ThyA subfamily. In terms of assembly, homodimer.

The protein localises to the cytoplasm. The enzyme catalyses dUMP + (6R)-5,10-methylene-5,6,7,8-tetrahydrofolate = 7,8-dihydrofolate + dTMP. It participates in pyrimidine metabolism; dTTP biosynthesis. Functionally, catalyzes the reductive methylation of 2'-deoxyuridine-5'-monophosphate (dUMP) to 2'-deoxythymidine-5'-monophosphate (dTMP) while utilizing 5,10-methylenetetrahydrofolate (mTHF) as the methyl donor and reductant in the reaction, yielding dihydrofolate (DHF) as a by-product. This enzymatic reaction provides an intracellular de novo source of dTMP, an essential precursor for DNA biosynthesis. In Shewanella oneidensis (strain ATCC 700550 / JCM 31522 / CIP 106686 / LMG 19005 / NCIMB 14063 / MR-1), this protein is Thymidylate synthase.